A 394-amino-acid polypeptide reads, in one-letter code: Elongation factor Tu (394 aa).

The tr-type G domain occupies 10 to 204 (KPHVNIGTIG…AVDEYIPTPD (195 aa)). The tract at residues 19 to 26 (GHIDHGKT) is G1. 19–26 (GHIDHGKT) provides a ligand contact to GTP. Position 26 (threonine 26) interacts with Mg(2+). The interval 60–64 (GITIN) is G2. Positions 81 to 84 (DCPG) are G3. Residues 81-85 (DCPGH) and 136-139 (NKCD) contribute to the GTP site. The interval 136-139 (NKCD) is G4. The interval 174–176 (SAL) is G5.

Belongs to the TRAFAC class translation factor GTPase superfamily. Classic translation factor GTPase family. EF-Tu/EF-1A subfamily. As to quaternary structure, monomer.

Its subcellular location is the cytoplasm. The enzyme catalyses GTP + H2O = GDP + phosphate + H(+). GTP hydrolase that promotes the GTP-dependent binding of aminoacyl-tRNA to the A-site of ribosomes during protein biosynthesis. The chain is Elongation factor Tu from Mycoplasmoides gallisepticum (strain R(low / passage 15 / clone 2)) (Mycoplasma gallisepticum).